The primary structure comprises 340 residues: GTP 3',8-cyclase (340 aa).

The region spanning 20–246 (RFQRQYTYLR…PKAVNDGPAK (227 aa)) is the Radical SAM core domain. GTP is bound at residue Arg29. Residues Cys36 and Cys40 each coordinate [4Fe-4S] cluster. Tyr42 contacts S-adenosyl-L-methionine. Cys43 lines the [4Fe-4S] cluster pocket. Arg79 is a binding site for GTP. Residue Gly83 coordinates S-adenosyl-L-methionine. Thr110 provides a ligand contact to GTP. Ser134 serves as a coordination point for S-adenosyl-L-methionine. Lys171 lines the GTP pocket. Met205 contributes to the S-adenosyl-L-methionine binding site. The [4Fe-4S] cluster site is built by Cys268 and Cys271. 273 to 275 (RLR) provides a ligand contact to GTP. [4Fe-4S] cluster is bound at residue Cys285.

The protein belongs to the radical SAM superfamily. MoaA family. Monomer and homodimer. The cofactor is [4Fe-4S] cluster.

It catalyses the reaction GTP + AH2 + S-adenosyl-L-methionine = (8S)-3',8-cyclo-7,8-dihydroguanosine 5'-triphosphate + 5'-deoxyadenosine + L-methionine + A + H(+). Its pathway is cofactor biosynthesis; molybdopterin biosynthesis. Its function is as follows. Catalyzes the cyclization of GTP to (8S)-3',8-cyclo-7,8-dihydroguanosine 5'-triphosphate. The chain is GTP 3',8-cyclase from Haemophilus ducreyi (strain 35000HP / ATCC 700724).